The chain runs to 124 residues: MSMNPIKKTEETVAAPAVNKISITLTSRNPKSLEKVCADIITLAKNKKVKAKGPIRIPNKVLKITTRKSPCGEGTNTWDRFEMRIHKRVIHILSTQDFVKEMNTISIEAGVDVEVIMDKKEAKN.

This sequence belongs to the universal ribosomal protein uS10 family.

The sequence is that of Small ribosomal subunit protein uS10 (rps20) from Dictyostelium discoideum (Social amoeba).